A 123-amino-acid chain; its full sequence is Large ribosomal subunit protein uL24 (123 aa).

It belongs to the universal ribosomal protein uL24 family. Part of the 50S ribosomal subunit.

One of two assembly initiator proteins, it binds directly to the 5'-end of the 23S rRNA, where it nucleates assembly of the 50S subunit. In terms of biological role, located at the polypeptide exit tunnel on the outside of the subunit. The sequence is that of Large ribosomal subunit protein uL24 from Methanocella arvoryzae (strain DSM 22066 / NBRC 105507 / MRE50).